A 308-amino-acid chain; its full sequence is Glycine-rich protein GRP33 (308 aa).

One can recognise a KH domain in the interval 83-118 (DQFPKYNFLGKLLGPGGSTMKQLQDETMTKISILGR). 2 stretches are compositionally biased toward gly residues: residues 203 to 220 (GPMGPQGRGRGRGRGGFS) and 273 to 294 (RGAGAGARGARGGLDQSRGGGK). 2 disordered regions span residues 203 to 222 (GPMGPQGRGRGRGRGGFSGP) and 270 to 308 (SPGRGAGAGARGARGGLDQSRGGGKFPSARGGRGRAAPY).

The arginines in the Gly-rich domain might be methylated.

This chain is Glycine-rich protein GRP33, found in Artemia salina (Brine shrimp).